Here is a 393-residue protein sequence, read N- to C-terminus: Homoserine O-succinyltransferase (393 aa).

The region spanning N62–D372 is the AB hydrolase-1 domain. S168 functions as the Nucleophile in the catalytic mechanism. A substrate-binding site is contributed by R238. Active-site residues include D333 and H366. Residue D367 coordinates substrate.

Belongs to the AB hydrolase superfamily. MetX family. As to quaternary structure, homodimer.

The protein localises to the cytoplasm. The catalysed reaction is L-homoserine + succinyl-CoA = O-succinyl-L-homoserine + CoA. It functions in the pathway amino-acid biosynthesis; L-methionine biosynthesis via de novo pathway; O-succinyl-L-homoserine from L-homoserine: step 1/1. Transfers a succinyl group from succinyl-CoA to L-homoserine, forming succinyl-L-homoserine. The polypeptide is Homoserine O-succinyltransferase (Cupriavidus necator (strain ATCC 17699 / DSM 428 / KCTC 22496 / NCIMB 10442 / H16 / Stanier 337) (Ralstonia eutropha)).